A 57-amino-acid polypeptide reads, in one-letter code: UPF0391 membrane protein Nwi_2359 (57 aa).

Transmembrane regions (helical) follow at residues 4–24 and 30–50; these read WVVT…GGIA and IAKI…VVGF.

This sequence belongs to the UPF0391 family.

The protein resides in the cell membrane. In Nitrobacter winogradskyi (strain ATCC 25391 / DSM 10237 / CIP 104748 / NCIMB 11846 / Nb-255), this protein is UPF0391 membrane protein Nwi_2359.